Reading from the N-terminus, the 233-residue chain is Preprocaerulein type-4 (233 aa).

The N-terminal stretch at Met-1–Ala-26 is a signal peptide. Residues Asp-27–Gly-72 constitute a propeptide that is removed on maturation. Gln-73 carries the pyrrolidone carboxylic acid modification. Tyr-76 bears the Sulfotyrosine mark. Phe-82 is subject to Phenylalanine amide. The propeptide occupies Asp-86–Gly-87. Residue Gln-88 is modified to Pyrrolidone carboxylic acid. Tyr-91 is subject to Sulfotyrosine. At Phe-97 the chain carries Phenylalanine amide. Residues Asp-101–Gly-151 constitute a propeptide that is removed on maturation. Position 152 is a pyrrolidone carboxylic acid (Gln-152). Tyr-155 is subject to Sulfotyrosine. Phe-161 bears the Phenylalanine amide mark. Positions Asp-165–Gly-215 are excised as a propeptide. Residues Leu-197–Asp-233 form a disordered region. Gln-216 carries the pyrrolidone carboxylic acid modification. Tyr-219 is modified (sulfotyrosine). Phenylalanine amide is present on Phe-225. Positions Asn-229–Asp-233 are excised as a propeptide.

Belongs to the gastrin/cholecystokinin family. In terms of tissue distribution, expressed by the skin glands.

It is found in the secreted. Its function is as follows. The pharmacological activities of caerulein are quite similar to the physiological activities of gastrin and related peptides. The chain is Preprocaerulein type-4 from Xenopus laevis (African clawed frog).